The primary structure comprises 716 residues: Astellifadiene synthase (716 aa).

Positions 1-323 (MEFKYSTLID…SPRYYTDAKF (323 aa)) are terpene cyclase. Mg(2+) is bound at residue D92. Residues D92, 179–182 (RIYD), N223, 227–231 (SWEKE), and 316–317 (RY) contribute to the substrate site. Positions 92 to 96 (DDVID) match the DDXXD 1 motif. An NSE/DTE motif is present at residues 223-231 (NDLVSWEKE). Positions 324–713 (SQRQLDWIKN…FQLKLILQFL (390 aa)) are prenyltransferase. Isopentenyl diphosphate is bound by residues K436, R439, and H468. The Mg(2+) site is built by D475 and D479. Positions 475-479 (DDVED) match the DDXXD 2 motif. Position 484 (R484) interacts with dimethylallyl diphosphate. Residue R485 participates in isopentenyl diphosphate binding. 6 residues coordinate dimethylallyl diphosphate: K562, T563, Q598, N605, K615, and K625.

This sequence in the N-terminal section; belongs to the terpene synthase family. It in the C-terminal section; belongs to the FPP/GGPP synthase family. Hexamer. Mg(2+) serves as cofactor.

The catalysed reaction is isopentenyl diphosphate + (2E,6E)-farnesyl diphosphate = (2E,6E,10E)-geranylgeranyl diphosphate + diphosphate. It catalyses the reaction isopentenyl diphosphate + (2E,6E,10E)-geranylgeranyl diphosphate = (2E,6E,10E,14E)-geranylfarnesyl diphosphate + diphosphate. The enzyme catalyses (2E,6E,10E,14E)-geranylfarnesyl diphosphate = astellifadiene + diphosphate. Its pathway is secondary metabolite biosynthesis; terpenoid biosynthesis. In terms of biological role, bifunctional terpene synthase that converts dimethylallyl diphosphate (DMAPP) and isopentenyl diphosphate (IPP) into astellifadiene. The C-terminal prenyltransferase (PT) domain of EvAS catalyzes formation of geranylfarnesyl pyrophosphate (GFPP), whereas the N-terminal terpene cyclase (TC) domain catalyzes the cyclization of GFPP to astellifadiene. In Emericella variicolor (Aspergillus stellatus), this protein is Astellifadiene synthase.